Consider the following 356-residue polypeptide: Hyaluronan and proteoglycan link protein 1 (356 aa).

Positions 1-9 (MRSLLLLVL) are excised as a propeptide. Residues 40–154 (PRLLVEAEQA…EGLEDDTAVV (115 aa)) form the Ig-like V-type domain. N-linked (GlcNAc...) asparagine glycosylation occurs at Asn-58. Disulfide bonds link Cys-63–Cys-141, Cys-183–Cys-254, Cys-207–Cys-228, Cys-281–Cys-351, and Cys-306–Cys-327. 2 Link domains span residues 161–256 (VVFP…FCFT) and 261–353 (GRFY…YCFR).

It belongs to the HAPLN family. In terms of tissue distribution, ubiquitously expressed.

It is found in the secreted. The protein localises to the extracellular space. It localises to the extracellular matrix. In terms of biological role, stabilizes the aggregates of proteoglycan monomers with hyaluronic acid in the extracellular cartilage matrix. The protein is Hyaluronan and proteoglycan link protein 1 (Hapln1) of Mus musculus (Mouse).